Reading from the N-terminus, the 339-residue chain is Methionine import ATP-binding protein MetN 2 (339 aa).

The region spanning 2–241 (ISFNNVSKLY…PKTKTTQNFV (240 aa)) is the ABC transporter domain. 38-45 (GFSGAGKS) is a binding site for ATP.

It belongs to the ABC transporter superfamily. Methionine importer (TC 3.A.1.24) family. In terms of assembly, the complex is composed of two ATP-binding proteins (MetN), two transmembrane proteins (MetI) and a solute-binding protein (MetQ).

The protein localises to the cell membrane. The catalysed reaction is L-methionine(out) + ATP + H2O = L-methionine(in) + ADP + phosphate + H(+). It catalyses the reaction D-methionine(out) + ATP + H2O = D-methionine(in) + ADP + phosphate + H(+). In terms of biological role, part of the ABC transporter complex MetNIQ involved in methionine import. Responsible for energy coupling to the transport system. The protein is Methionine import ATP-binding protein MetN 2 of Bacillus cereus (strain ATCC 14579 / DSM 31 / CCUG 7414 / JCM 2152 / NBRC 15305 / NCIMB 9373 / NCTC 2599 / NRRL B-3711).